Here is a 326-residue protein sequence, read N- to C-terminus: GTP 3',8-cyclase (326 aa).

Residues A7–Q240 enclose the Radical SAM core domain. Position 16 (R16) interacts with GTP. C23 and C27 together coordinate [4Fe-4S] cluster. Y29 contributes to the S-adenosyl-L-methionine binding site. C30 contributes to the [4Fe-4S] cluster binding site. Residue R65 coordinates GTP. G69 lines the S-adenosyl-L-methionine pocket. T96 contributes to the GTP binding site. S120 contacts S-adenosyl-L-methionine. K157 provides a ligand contact to GTP. Position 191 (M191) interacts with S-adenosyl-L-methionine. Positions 254 and 257 each coordinate [4Fe-4S] cluster. R259–R261 is a binding site for GTP. Residue C271 participates in [4Fe-4S] cluster binding.

It belongs to the radical SAM superfamily. MoaA family. As to quaternary structure, monomer and homodimer. [4Fe-4S] cluster serves as cofactor.

The catalysed reaction is GTP + AH2 + S-adenosyl-L-methionine = (8S)-3',8-cyclo-7,8-dihydroguanosine 5'-triphosphate + 5'-deoxyadenosine + L-methionine + A + H(+). Its pathway is cofactor biosynthesis; molybdopterin biosynthesis. Its function is as follows. Catalyzes the cyclization of GTP to (8S)-3',8-cyclo-7,8-dihydroguanosine 5'-triphosphate. This is GTP 3',8-cyclase from Yersinia pestis.